Here is a 413-residue protein sequence, read N- to C-terminus: Zeaxanthin glucosyltransferase (413 aa).

It belongs to the UDP-glycosyltransferase family.

It carries out the reaction all-trans-zeaxanthin + 2 UDP-alpha-D-glucose = zeaxanthin bis(beta-D-glucoside) + 2 UDP + 2 H(+). The protein operates within carotenoid biosynthesis; zeaxanthin diglucoside biosynthesis. Catalyzes the glycosylation reaction which converts zeaxanthin to zeaxanthin bis(beta-D-glucoside). The reaction proceeds in two steps with the monoglucoside as an intermediate. The polypeptide is Zeaxanthin glucosyltransferase (crtX) (Pseudescherichia vulneris (Escherichia vulneris)).